The chain runs to 230 residues: Urease accessory protein UreG (230 aa).

Residues 1–31 (MPPHFLSADSTGQPHRHADRPKRVRTPGEPL) are disordered. Residues 14-25 (PHRHADRPKRVR) show a composition bias toward basic residues. Residue 37–44 (GPVGSGKT) participates in GTP binding.

The protein belongs to the SIMIBI class G3E GTPase family. UreG subfamily. As to quaternary structure, homodimer. UreD, UreF and UreG form a complex that acts as a GTP-hydrolysis-dependent molecular chaperone, activating the urease apoprotein by helping to assemble the nickel containing metallocenter of UreC. The UreE protein probably delivers the nickel.

The protein localises to the cytoplasm. In terms of biological role, facilitates the functional incorporation of the urease nickel metallocenter. This process requires GTP hydrolysis, probably effectuated by UreG. The protein is Urease accessory protein UreG of Mycobacterium sp. (strain JLS).